The sequence spans 353 residues: Uroporphyrinogen decarboxylase (353 aa).

Substrate contacts are provided by residues 30–34 (RQAGR), D79, Y154, S209, and H332.

It belongs to the uroporphyrinogen decarboxylase family. As to quaternary structure, homodimer.

The protein localises to the cytoplasm. The enzyme catalyses uroporphyrinogen III + 4 H(+) = coproporphyrinogen III + 4 CO2. It participates in porphyrin-containing compound metabolism; protoporphyrin-IX biosynthesis; coproporphyrinogen-III from 5-aminolevulinate: step 4/4. In terms of biological role, catalyzes the decarboxylation of four acetate groups of uroporphyrinogen-III to yield coproporphyrinogen-III. This chain is Uroporphyrinogen decarboxylase, found in Mycolicibacterium smegmatis (strain ATCC 700084 / mc(2)155) (Mycobacterium smegmatis).